We begin with the raw amino-acid sequence, 193 residues long: NADPH:quinone oxidoreductase MdaB (193 aa).

Residues 16-23 (SNGQLNDT), 69-72 (GWWM), tyrosine 108, and 124-127 (TWNA) contribute to the FAD site.

It belongs to the oxidoreductase MdaB family. Homodimer. FAD is required as a cofactor.

The protein resides in the cytoplasm. It carries out the reaction a quinone + NADPH + H(+) = a quinol + NADP(+). Functionally, NADPH-specific quinone reductase. This is NADPH:quinone oxidoreductase MdaB from Escherichia coli O157:H7.